A 213-amino-acid chain; its full sequence is AN1-type zinc finger protein 5 (213 aa).

The segment at 8-42 (TPGPMLCSTGCGFYGNPRTNGMCSVCYKEHLQRQQ) adopts an A20-type zinc-finger fold. 4 residues coordinate Zn(2+): cysteine 14, cysteine 18, cysteine 30, and cysteine 33. The disordered stretch occupies residues 39–149 (QRQQNSGRMS…EEKAPELPKP (111 aa)). Residues 40–75 (RQQNSGRMSPMGTASGSNSPTSDSASVQRADTSLNN) are compositionally biased toward polar residues. Residues serine 48 and serine 58 each carry the phosphoserine modification. Residues 120–138 (SEPVVTQPSPSVSQPSTSQ) show a composition bias toward low complexity. Basic and acidic residues predominate over residues 139-148 (SEEKAPELPK). An AN1-type zinc finger spans residues 148–194 (KPKKNRCFMCRKKVGLTGFDCRCGNLFCGLHRYSDKHNCPYDYKAEA). The Zn(2+) site is built by cysteine 154, cysteine 157, cysteine 168, cysteine 170, cysteine 175, histidine 178, histidine 184, and cysteine 186. Residue lysine 209 is modified to N6-acetyllysine.

Interacts with ubiquitin and polyubiquitinated proteins. Identified in a heterotrimeric complex with ubiquitin and SQSTM1, where ZFAND5 and SQSTM1 both interact with the same ubiquitin molecule. Homooligomer and/or heterooligomer. Interacts (via A20-type domain) with IKBKG and RIPK1 and with TRAF6 (via AN1-type domain). Highly expressed in skeletal muscle. Expressed in fetal cochlea. Also expressed in infant brain, fetal heart, pancreatic islet, melanocyte, pineal gland, placenta, corneal stroma, and parathyroid tumor. Weakly expressed or undetectable in adult brain, heart, colon, thymus, spleen, kidney, liver, small intestine, placenta, lung and peripheral blood leukocytes. Expressed in rhabdomyosarcoma RD cells (at protein level).

The protein localises to the cytoplasm. In terms of biological role, involved in protein degradation via the ubiquitin-proteasome system. May act by anchoring ubiquitinated proteins to the proteasome. Plays a role in ubiquitin-mediated protein degradation during muscle atrophy. Plays a role in the regulation of NF-kappa-B activation and apoptosis. Inhibits NF-kappa-B activation triggered by overexpression of RIPK1 and TRAF6 but not of RELA. Also inhibits tumor necrosis factor (TNF), IL-1 and TLR4-induced NF-kappa-B activation in a dose-dependent manner. Overexpression sensitizes cells to TNF-induced apoptosis. Is a potent inhibitory factor for osteoclast differentiation. The sequence is that of AN1-type zinc finger protein 5 (ZFAND5) from Homo sapiens (Human).